A 156-amino-acid chain; its full sequence is MSRRNAAVKRPVLPDPQFNSRLASMMISRLMKHGKKSTAQRILSDAFSLISERTGGDAVELFETAVKNATPLVEVRARRVGGATYQVPMEVRQERGTAMALRWLVTFSRARNGKSMSQKLAGELMDAANETGSSVKKREDTHKMAEANKAFAHYRY.

This sequence belongs to the universal ribosomal protein uS7 family. In terms of assembly, part of the 30S ribosomal subunit. Contacts proteins S9 and S11.

In terms of biological role, one of the primary rRNA binding proteins, it binds directly to 16S rRNA where it nucleates assembly of the head domain of the 30S subunit. Is located at the subunit interface close to the decoding center, probably blocks exit of the E-site tRNA. The protein is Small ribosomal subunit protein uS7 of Prochlorococcus marinus (strain MIT 9312).